The chain runs to 343 residues: MDSTVYSTPPTNSISLAEAIKIAEARFEAAVQGCKDDWHNGNDLVILQDNIPQLFGGILVEHFKRCVGEVCGFPVELTVMDGGDNYHTLVQMPKNNMRSPQVVSSPQSAQTSPSEQTSINLKAVAAGLKKAPRPMNCWIIFRDAMHKHLKAEFPHLTIQEISTRCSHIWHNLSPEAKKPWQDAAQSAKEEHLRQHPNYKYTPRKPGEKKKRQSRKSKRAAAMTTAPEVLQFQLSPKLIPTVPEVTDEPPLAANPVTANGNNACPEDVSNCFDPNVFPEIYPEAPMAADFFYNTESIRHSLLDTEFDIDFNMDTTFALFDDEMLAFRDGADGDATLPSLFEDTY.

Disordered stretches follow at residues 98–117 (RSPQVVSSPQSAQTSPSEQT) and 177–223 (KKPW…AAMT). Residues 99–117 (SPQVVSSPQSAQTSPSEQT) are compositionally biased toward low complexity. The segment at residues 131 to 199 (APRPMNCWII…EHLRQHPNYK (69 aa)) is a DNA-binding region (HMG box). A compositionally biased stretch (basic residues) spans 206-218 (GEKKKRQSRKSKR).

It is found in the nucleus. The chain is Mating-type protein MAT-2 (MAT2) from Cochliobolus heterostrophus (Southern corn leaf blight fungus).